The chain runs to 569 residues: Urease subunit alpha (569 aa).

Residues 131 to 569 (GGIDTHIHFI…LPLAQRYLLL (439 aa)) enclose the Urease domain. Positions 136, 138, and 219 each coordinate Ni(2+). Residue Lys219 is modified to N6-carboxylysine. Position 221 (His221) interacts with substrate. Ni(2+)-binding residues include His248 and His274. His322 serves as the catalytic Proton donor. Asp362 contacts Ni(2+).

The protein belongs to the metallo-dependent hydrolases superfamily. Urease alpha subunit family. Heterotrimer of UreA (gamma), UreB (beta) and UreC (alpha) subunits. Three heterotrimers associate to form the active enzyme. It depends on Ni cation as a cofactor. Post-translationally, carboxylation allows a single lysine to coordinate two nickel ions.

The protein resides in the cytoplasm. The enzyme catalyses urea + 2 H2O + H(+) = hydrogencarbonate + 2 NH4(+). It functions in the pathway nitrogen metabolism; urea degradation; CO(2) and NH(3) from urea (urease route): step 1/1. This chain is Urease subunit alpha, found in Parasynechococcus marenigrum (strain WH8102).